Reading from the N-terminus, the 289-residue chain is Formamidopyrimidine-DNA glycosylase (289 aa).

The Schiff-base intermediate with DNA role is filled by Pro-2. The active-site Proton donor is Glu-3. Lys-60 (proton donor; for beta-elimination activity) is an active-site residue. 3 residues coordinate DNA: His-94, Arg-126, and Arg-167. An FPG-type zinc finger spans residues Gln-252–Pro-287. Residue Arg-277 is the Proton donor; for delta-elimination activity of the active site.

Belongs to the FPG family. In terms of assembly, monomer. It depends on Zn(2+) as a cofactor.

The catalysed reaction is Hydrolysis of DNA containing ring-opened 7-methylguanine residues, releasing 2,6-diamino-4-hydroxy-5-(N-methyl)formamidopyrimidine.. It catalyses the reaction 2'-deoxyribonucleotide-(2'-deoxyribose 5'-phosphate)-2'-deoxyribonucleotide-DNA = a 3'-end 2'-deoxyribonucleotide-(2,3-dehydro-2,3-deoxyribose 5'-phosphate)-DNA + a 5'-end 5'-phospho-2'-deoxyribonucleoside-DNA + H(+). Functionally, involved in base excision repair of DNA damaged by oxidation or by mutagenic agents. Acts as a DNA glycosylase that recognizes and removes damaged bases. Has a preference for oxidized purines, such as 7,8-dihydro-8-oxoguanine (8-oxoG). Has AP (apurinic/apyrimidinic) lyase activity and introduces nicks in the DNA strand. Cleaves the DNA backbone by beta-delta elimination to generate a single-strand break at the site of the removed base with both 3'- and 5'-phosphates. In Thermomicrobium roseum (strain ATCC 27502 / DSM 5159 / P-2), this protein is Formamidopyrimidine-DNA glycosylase.